A 399-amino-acid polypeptide reads, in one-letter code: Elongation factor Tu (399 aa).

In terms of domain architecture, tr-type G spans 10 to 209 (KPHVNIGTIG…EVDAYIPTPK (200 aa)). The tract at residues 19–26 (GHVDHGKT) is G1. Position 19–26 (19–26 (GHVDHGKT)) interacts with GTP. Thr26 lines the Mg(2+) pocket. A G2 region spans residues 60–64 (GITIA). Residues 81-84 (DCPG) are G3. Residues 81 to 85 (DCPGH) and 136 to 139 (NKQD) each bind GTP. Residues 136–139 (NKQD) are G4. A G5 region spans residues 174–176 (SAL).

The protein belongs to the TRAFAC class translation factor GTPase superfamily. Classic translation factor GTPase family. EF-Tu/EF-1A subfamily. In terms of assembly, monomer.

Its subcellular location is the cytoplasm. It carries out the reaction GTP + H2O = GDP + phosphate + H(+). In terms of biological role, GTP hydrolase that promotes the GTP-dependent binding of aminoacyl-tRNA to the A-site of ribosomes during protein biosynthesis. The polypeptide is Elongation factor Tu (Helicobacter pylori (strain P12)).